We begin with the raw amino-acid sequence, 250 residues long: tRNA (guanine-N(1)-)-methyltransferase (250 aa).

S-adenosyl-L-methionine-binding positions include G116 and 136 to 141 (IGDYVL).

The protein belongs to the RNA methyltransferase TrmD family. Homodimer.

The protein localises to the cytoplasm. It carries out the reaction guanosine(37) in tRNA + S-adenosyl-L-methionine = N(1)-methylguanosine(37) in tRNA + S-adenosyl-L-homocysteine + H(+). Its function is as follows. Specifically methylates guanosine-37 in various tRNAs. The sequence is that of tRNA (guanine-N(1)-)-methyltransferase from Pseudomonas putida (strain W619).